Consider the following 89-residue polypeptide: uncharacterized protein (89 aa).

This is an uncharacterized protein from Sinorhizobium fredii (strain NBRC 101917 / NGR234).